The chain runs to 243 residues: GFSLQDELDFLKKLHDEELADVQAQIQDQQVQVDMDMAKPDLTAALRDVRLQYENLATKNIQESEDWYKSKFADMTEAANKSNEALRLAKQEANEYRRQVQALTCEVDALKGTNESLERQMREIEENFAIESSSSQDNIARLEEDIRNMKDEMAKHLREYQDLLNVKMALDIEIATYRKLLEGEESRITTPLPNLSSFNLRDAILETKPILENTFSKKVLIKTIETRDGEVINESTQNHDDLE.

Residues glycine 1–valine 22 form a coil 1B region. An IF rod domain is found at glycine 1 to isoleucine 188. The tract at residues glutamine 23–alanine 45 is linker 12. The coil 2 stretch occupies residues leucine 46–glutamate 184. Residues glutamate 185 to glutamate 243 are tail.

It belongs to the intermediate filament family. In terms of assembly, homomer. In terms of processing, one of the most prominent phosphoproteins in various cells of mesenchymal origin. Phosphorylation is enhanced during cell division, at which time vimentin filaments are significantly reorganized. Expressed in low amounts in retina, optic nerve, and brain and in higher amounts in spinal cord.

In terms of biological role, vimentins are class-III intermediate filaments found in various non-epithelial cells, especially mesenchymal cells. Vimentin is attached to the nucleus, endoplasmic reticulum, and mitochondria, either laterally or terminally. The chain is Vimentin A2 from Carassius auratus (Goldfish).